A 131-amino-acid polypeptide reads, in one-letter code: Transcription antitermination protein NusB (131 aa).

It belongs to the NusB family.

Its function is as follows. Involved in transcription antitermination. Required for transcription of ribosomal RNA (rRNA) genes. Binds specifically to the boxA antiterminator sequence of the ribosomal RNA (rrn) operons. This chain is Transcription antitermination protein NusB, found in Campylobacter hominis (strain ATCC BAA-381 / DSM 21671 / CCUG 45161 / LMG 19568 / NCTC 13146 / CH001A).